The sequence spans 277 residues: Pantothenate synthetase (277 aa).

26 to 33 (MGNLHEGH) contacts ATP. The Proton donor role is filled by His33. Residue Gln57 participates in (R)-pantoate binding. Gln57 is a beta-alanine binding site. Residue 144–147 (GKKD) participates in ATP binding. Gln150 is a (R)-pantoate binding site. Residues Gly173 and 181 to 184 (LSSR) each bind ATP.

Belongs to the pantothenate synthetase family. As to quaternary structure, homodimer.

The protein localises to the cytoplasm. It catalyses the reaction (R)-pantoate + beta-alanine + ATP = (R)-pantothenate + AMP + diphosphate + H(+). It participates in cofactor biosynthesis; (R)-pantothenate biosynthesis; (R)-pantothenate from (R)-pantoate and beta-alanine: step 1/1. In terms of biological role, catalyzes the condensation of pantoate with beta-alanine in an ATP-dependent reaction via a pantoyl-adenylate intermediate. The chain is Pantothenate synthetase from Laribacter hongkongensis (strain HLHK9).